The chain runs to 488 residues: Glutamyl-tRNA(Gln) amidotransferase subunit A (488 aa).

Catalysis depends on charge relay system residues Lys-77 and Ser-152. Ser-176 acts as the Acyl-ester intermediate in catalysis.

The protein belongs to the amidase family. GatA subfamily. As to quaternary structure, heterotrimer of A, B and C subunits.

The catalysed reaction is L-glutamyl-tRNA(Gln) + L-glutamine + ATP + H2O = L-glutaminyl-tRNA(Gln) + L-glutamate + ADP + phosphate + H(+). Its function is as follows. Allows the formation of correctly charged Gln-tRNA(Gln) through the transamidation of misacylated Glu-tRNA(Gln) in organisms which lack glutaminyl-tRNA synthetase. The reaction takes place in the presence of glutamine and ATP through an activated gamma-phospho-Glu-tRNA(Gln). This chain is Glutamyl-tRNA(Gln) amidotransferase subunit A, found in Streptococcus pyogenes serotype M1.